Reading from the N-terminus, the 282-residue chain is NADPH-dependent 7-cyano-7-deazaguanine reductase (282 aa).

A substrate-binding site is contributed by 88-90 (IES). An NADPH-binding site is contributed by 90–91 (SK). Cys-190 functions as the Thioimide intermediate in the catalytic mechanism. Catalysis depends on Asp-197, which acts as the Proton donor. 229-230 (HE) is a substrate binding site. 258 to 259 (RG) is an NADPH binding site.

This sequence belongs to the GTP cyclohydrolase I family. QueF type 2 subfamily. In terms of assembly, homodimer.

It is found in the cytoplasm. The enzyme catalyses 7-aminomethyl-7-carbaguanine + 2 NADP(+) = 7-cyano-7-deazaguanine + 2 NADPH + 3 H(+). The protein operates within tRNA modification; tRNA-queuosine biosynthesis. In terms of biological role, catalyzes the NADPH-dependent reduction of 7-cyano-7-deazaguanine (preQ0) to 7-aminomethyl-7-deazaguanine (preQ1). The polypeptide is NADPH-dependent 7-cyano-7-deazaguanine reductase (Shigella flexneri serotype 5b (strain 8401)).